A 188-amino-acid chain; its full sequence is mRNA transport factor GFD1 (188 aa).

Positions 1 to 128 (MPLESIWADA…KTQSKQDTAS (128 aa)) are disordered. A compositionally biased stretch (basic residues) spans 18–28 (KQKPSHKRSNN). Residues 29–44 (NKKNNNSRWSNESSSN) show a composition bias toward low complexity. Residues 59 to 79 (GNHESKTKNKIKETLPREKKP) show a composition bias toward basic and acidic residues. 3 positions are modified to phosphoserine: serine 87, serine 106, and serine 111. A compositionally biased stretch (low complexity) spans 112–128 (PSKMKTTKTQSKQDTAS). The stretch at 119–164 (KTQSKQDTASKMKLLKKKIEEQREILQKTHHKNQQQQVLMDFLNDE) forms a coiled coil.

In terms of assembly, interacts with GLE1, NUP42, NAB2, ZDS1 and probably DBP5. Forms a complex with GLE1 and NAB2.

The protein localises to the cytoplasm. It is found in the nucleus. The protein resides in the nuclear pore complex. Its subcellular location is the nucleus membrane. High-copy suppressor of mutant alleles of ATP-dependent RNA helicase DBP5, which is involved in mRNA export from the nucleus. It may also play an important role in a late stage of NAB2-mRNA export. The sequence is that of mRNA transport factor GFD1 (GFD1) from Saccharomyces cerevisiae (strain ATCC 204508 / S288c) (Baker's yeast).